Consider the following 419-residue polypeptide: Protein indeterminate-domain 14 (419 aa).

The disordered stretch occupies residues 1–58; the sequence is MIDYERSNTTKNINTHHHNPPPSSSSSDLLPDGNGTAVTQKRKRRPAGTPDPEAEVVS. 3 consecutive C2H2-type zinc fingers follow at residues 70 to 92, 112 to 142, and 148 to 175; these read YVCEICNQGFQRDQNLQMHRRRH, YVCPEPTCLHHNPCHALGDLVGIKKHFRRKH, and WICERCSKGYAVQSDYKAHLKTCGTRGH. Positions 150, 153, 166, 170, 177, 179, 192, and 196 each coordinate Zn(2+). The CCHC-type 2; atypical zinc finger occupies 175–198; sequence HSCDCGRVFSRVESFIEHQDTCTV. Residues 185–197 are SHR-binding; sequence RVESFIEHQDTCT. Disordered stretches follow at residues 200 to 259 and 298 to 318; these read RSQP…PSTL and SEVEKKSYEKGETSLEREEAR. Low complexity-rich tracts occupy residues 213-230 and 246-259; these read QHTTNATQTASTAENNEN and RRQSPPSEQQPSTL. The stretch at 313–349 forms a coiled coil; that stretch reads EREEARRETKRQIEIAELEFAEAKRIRQHARAELHKA.

Homo- and heterodimer of IDD14alpha and IDD14beta. In terms of tissue distribution, expressed in cotyledons and the vasculature of reosette leaves. Weak expression in hypocotyls and floral organs, but not detected in roots and inflorescence stems.

The protein localises to the nucleus. Transcription factor regulating starch metabolism by binding directly to the promoter of QQS. The IDD14beta isoform attenuates the transcription factor activity by competitively forming heterodimers with reduced DNA-binding capacity. Regulates lateral organ morphogenesis and gravitropic responses. Has a redundant role with IDD16 in directing leaf and floral organ morphogenesis. Involved in the establishment of auxin gradients through the regulation of auxin biosynthesis and transport. This Arabidopsis thaliana (Mouse-ear cress) protein is Protein indeterminate-domain 14.